A 449-amino-acid chain; its full sequence is Probable glycine dehydrogenase (decarboxylating) subunit 1 (449 aa).

Belongs to the GcvP family. N-terminal subunit subfamily. As to quaternary structure, the glycine cleavage system is composed of four proteins: P, T, L and H. In this organism, the P 'protein' is a heterodimer of two subunits.

The catalysed reaction is N(6)-[(R)-lipoyl]-L-lysyl-[glycine-cleavage complex H protein] + glycine + H(+) = N(6)-[(R)-S(8)-aminomethyldihydrolipoyl]-L-lysyl-[glycine-cleavage complex H protein] + CO2. Its function is as follows. The glycine cleavage system catalyzes the degradation of glycine. The P protein binds the alpha-amino group of glycine through its pyridoxal phosphate cofactor; CO(2) is released and the remaining methylamine moiety is then transferred to the lipoamide cofactor of the H protein. The chain is Probable glycine dehydrogenase (decarboxylating) subunit 1 from Sulfurisphaera tokodaii (strain DSM 16993 / JCM 10545 / NBRC 100140 / 7) (Sulfolobus tokodaii).